The chain runs to 199 residues: CASP-like protein 1D2 (199 aa).

A disordered region spans residues 1-27; it reads MASTENPDPETGKSEPIPASATPPPSS. At Ala-2 the chain carries N-acetylalanine. Residues 2–36 are Cytoplasmic-facing; it reads ASTENPDPETGKSEPIPASATPPPSSAASFLDCRK. The helical transmembrane segment at 37 to 57 threads the bilayer; that stretch reads IDIITRVLLFSATLTALIVMV. Over 58 to 85 the chain is Extracellular; that stretch reads TSDQTEMTQLPGVSSPAPVSAEFNDSPA. Residues 86 to 106 traverse the membrane as a helical segment; the sequence is FIYFVVALVVASFYALISTLV. Residues 107–129 are Cytoplasmic-facing; sequence SISLLLKPEFTAQFSIYLASLDM. Residues 130–150 traverse the membrane as a helical segment; that stretch reads VMLGILASATGTAGGVAYIAL. The Extracellular segment spans residues 151 to 171; the sequence is KGNEEVGWNKICNVYDKFCRY. A helical membrane pass occupies residues 172 to 192; that stretch reads IATSLALSLFASLLLLVLSIW. The Cytoplasmic portion of the chain corresponds to 193 to 199; sequence SALSKRT.

It belongs to the Casparian strip membrane proteins (CASP) family. As to quaternary structure, homodimer and heterodimers. As to expression, expressed in the root endodermis and flowers.

The protein localises to the cell membrane. In Arabidopsis thaliana (Mouse-ear cress), this protein is CASP-like protein 1D2.